The chain runs to 574 residues: Proline--tRNA ligase (574 aa).

Belongs to the class-II aminoacyl-tRNA synthetase family. ProS type 1 subfamily. As to quaternary structure, homodimer.

The protein resides in the cytoplasm. It catalyses the reaction tRNA(Pro) + L-proline + ATP = L-prolyl-tRNA(Pro) + AMP + diphosphate. In terms of biological role, catalyzes the attachment of proline to tRNA(Pro) in a two-step reaction: proline is first activated by ATP to form Pro-AMP and then transferred to the acceptor end of tRNA(Pro). As ProRS can inadvertently accommodate and process non-cognate amino acids such as alanine and cysteine, to avoid such errors it has two additional distinct editing activities against alanine. One activity is designated as 'pretransfer' editing and involves the tRNA(Pro)-independent hydrolysis of activated Ala-AMP. The other activity is designated 'posttransfer' editing and involves deacylation of mischarged Ala-tRNA(Pro). The misacylated Cys-tRNA(Pro) is not edited by ProRS. The polypeptide is Proline--tRNA ligase (Nautilia profundicola (strain ATCC BAA-1463 / DSM 18972 / AmH)).